The primary structure comprises 110 residues: UPF0473 protein SSP1146 (110 aa).

This sequence belongs to the UPF0473 family.

The polypeptide is UPF0473 protein SSP1146 (Staphylococcus saprophyticus subsp. saprophyticus (strain ATCC 15305 / DSM 20229 / NCIMB 8711 / NCTC 7292 / S-41)).